Reading from the N-terminus, the 164-residue chain is MKTAVYPGSFDPITKGHLNIIKRASKVCDKLIVAVLVNPEKKGLFSVDERVEMIKRVTKNHSNIEVQCFSGLLIDFMKEKKSKVIIKGLRTMSDFEYEFKMALMNNKLDPNIETVFMMTNAKYSYLSSSSVKQVAMFGGCIKDLVPDEIIPDIKKKINHKKECI.

Position 9 (Ser-9) interacts with substrate. ATP-binding positions include 9 to 10 (SF) and His-17. Substrate contacts are provided by Lys-41, Leu-73, and Lys-87. Residues 88–90 (GLR), Glu-98, and 123–129 (YSYLSSS) contribute to the ATP site.

It belongs to the bacterial CoaD family. As to quaternary structure, homohexamer. Mg(2+) serves as cofactor.

It localises to the cytoplasm. The catalysed reaction is (R)-4'-phosphopantetheine + ATP + H(+) = 3'-dephospho-CoA + diphosphate. It functions in the pathway cofactor biosynthesis; coenzyme A biosynthesis; CoA from (R)-pantothenate: step 4/5. Reversibly transfers an adenylyl group from ATP to 4'-phosphopantetheine, yielding dephospho-CoA (dPCoA) and pyrophosphate. This chain is Phosphopantetheine adenylyltransferase, found in Clostridium botulinum (strain Okra / Type B1).